The chain runs to 272 residues: NH(3)-dependent NAD(+) synthetase (272 aa).

Position 45-52 (45-52) interacts with ATP; it reads GISGGQDS. D51 is a binding site for Mg(2+). R138 is a binding site for deamido-NAD(+). Residue T158 coordinates ATP. Mg(2+) is bound at residue E163. Deamido-NAD(+) is bound by residues K171 and D178. Residues K187 and T209 each coordinate ATP. Deamido-NAD(+) is bound at residue 258 to 259; it reads HK.

The protein belongs to the NAD synthetase family. In terms of assembly, homodimer.

The enzyme catalyses deamido-NAD(+) + NH4(+) + ATP = AMP + diphosphate + NAD(+) + H(+). Its pathway is cofactor biosynthesis; NAD(+) biosynthesis; NAD(+) from deamido-NAD(+) (ammonia route): step 1/1. Functionally, catalyzes the ATP-dependent amidation of deamido-NAD to form NAD. Uses ammonia as a nitrogen source. In Bacillus licheniformis (strain ATCC 14580 / DSM 13 / JCM 2505 / CCUG 7422 / NBRC 12200 / NCIMB 9375 / NCTC 10341 / NRRL NRS-1264 / Gibson 46), this protein is NH(3)-dependent NAD(+) synthetase.